We begin with the raw amino-acid sequence, 228 residues long: Cytidylate kinase (228 aa).

Residue 17-25 coordinates ATP; sequence GPTASGKGT.

Belongs to the cytidylate kinase family. Type 1 subfamily.

The protein localises to the cytoplasm. The catalysed reaction is CMP + ATP = CDP + ADP. It carries out the reaction dCMP + ATP = dCDP + ADP. The protein is Cytidylate kinase of Burkholderia pseudomallei (strain 1106a).